Reading from the N-terminus, the 854-residue chain is Protein mono-ADP-ribosyltransferase PARP8 (854 aa).

2 disordered regions span residues 113–138 (NGEE…EFYY) and 291–310 (SYPP…EQDG). Over residues 123-135 (VEEDSEGDNDSEE) the composition is skewed to acidic residues. Residues C332, C367, C376, and C395 each carry the ADP-ribosylcysteine modification. One can recognise a PARP catalytic domain in the interval 617-844 (EMTQAPYLEI…QEGGIHKEIL (228 aa)). The disordered stretch occupies residues 750–777 (QKVSAKDEPASSSKSSNTSQSQKKGQQS). Residues 760 to 777 (SSSKSSNTSQSQKKGQQS) show a composition bias toward low complexity.

The protein belongs to the ARTD/PARP family. Auto-mono-ADP-ribosylated.

It catalyses the reaction L-cysteinyl-[protein] + NAD(+) = S-(ADP-D-ribosyl)-L-cysteinyl-[protein] + nicotinamide + H(+). Its function is as follows. Mono-ADP-ribosyltransferase that mediates mono-ADP-ribosylation of target proteins. This Homo sapiens (Human) protein is Protein mono-ADP-ribosyltransferase PARP8.